The primary structure comprises 109 residues: Aquaporin-2 (109 aa).

The Cytoplasmic portion of the chain corresponds to S1–K6. Residues A7–L27 traverse the membrane as a helical segment. Topologically, residues N28–S35 are extracellular. Residues G36–L54 form a helical membrane-spanning segment. The Cytoplasmic segment spans residues G55–G59. The segment at residues A60–A69 is an intramembrane region (discontinuously helical). The NPA 1 signature appears at N63–A65. Residues C70–R80 lie on the Cytoplasmic side of the membrane. Residues A81–L102 form a helical membrane-spanning segment. Residues T103–G109 are Extracellular-facing.

It belongs to the MIP/aquaporin (TC 1.A.8) family. In terms of assembly, homotetramer. Post-translationally, serine phosphorylation is necessary and sufficient for expression at the apical membrane. Endocytosis is not phosphorylation-dependent. N-glycosylated.

It is found in the apical cell membrane. Its subcellular location is the basolateral cell membrane. The protein resides in the cell membrane. It localises to the cytoplasmic vesicle membrane. The protein localises to the golgi apparatus. It is found in the trans-Golgi network membrane. It catalyses the reaction H2O(in) = H2O(out). The catalysed reaction is glycerol(in) = glycerol(out). Forms a water-specific channel that provides the plasma membranes of renal collecting duct with high permeability to water, thereby permitting water to move in the direction of an osmotic gradient. Plays an essential role in renal water homeostasis. Could also be permeable to glycerol. The sequence is that of Aquaporin-2 from Orycteropus afer (Aardvark).